Reading from the N-terminus, the 532-residue chain is Protein DETOXIFICATION 51 (532 aa).

A run of 12 helical transmembrane segments spans residues 65 to 85 (FPIA…MFFL), 98 to 118 (LAIA…ALGM), 142 to 162 (VVFL…VGKI), 176 to 196 (AQTY…LHPI), 208 to 228 (PVTL…LFLV), 238 to 258 (VAVA…CYVW), 290 to 310 (VSVC…GLLV), 316 to 336 (VAAM…PSSL), 358 to 378 (LTAT…AAFA), 395 to 415 (ILQL…GNCP), 439 to 459 (AFYL…GIGF), and 461 to 481 (GLWV…MYVV).

Belongs to the multi antimicrobial extrusion (MATE) (TC 2.A.66.1) family. In terms of tissue distribution, expressed in the meristematic regions. Mainly detected in tissues where cells were actively dividing, such as leaf primordia and young leaves, the junction between lateral root and the primary root, root cap, hydathodes, the junction between secondary inflorescence and the main inflorescence, young stamen and young siliques. Highly expressed at the junction between the hypocotyl and the root, and at the marginal areas of cotyledons and true leaves, coinciding with the locations of the hydathode. Also highly expressed at the basal regions of the newly emerged lateral roots. In the floral organs, mostly expressed at the style of the pistil.

It is found in the endosome membrane. Its subcellular location is the late endosome membrane. Functions as a multidrug and toxin extrusion transporter that negatively regulates plant disease resistance. Plays an important role in maintaining normal plant architecture, possibly by regulating local auxin biosynthesis. May act as a negative regulator of hypocotyl cell elongation in the light. The chain is Protein DETOXIFICATION 51 from Arabidopsis thaliana (Mouse-ear cress).